We begin with the raw amino-acid sequence, 374 residues long: Ferroptosis suppressor protein 1 (374 aa).

The N-myristoyl glycine moiety is linked to residue G2. The helical transmembrane segment at V13–P35 threads the bilayer. Residues G17–A21, R53, and V81 each bind 6-hydroxy-FAD. K167 carries the post-translational modification N6-acetyllysine. Residue D285 participates in 6-hydroxy-FAD binding.

This sequence belongs to the FAD-dependent oxidoreductase family. It depends on 6-hydroxy-FAD as a cofactor. In terms of processing, N-myristoylation at Gly-2 mediates the recruitment to lipid droplets and plasma membrane. Acetylation at Lys-167 prevents AIFM2 ubiquitination and degradation, thereby inhibiting ferroptosis. KAT2B mediates acetylation at Lys-167, while HDAC3 removes it. Post-translationally, ubiquitinated. AIFM2 undergoes 'Lys-29'-ubiquitination and proteasomal degradation, which is inhibited by acetylation at Lys-167.

Its subcellular location is the lipid droplet. It localises to the cell membrane. It is found in the cytoplasm. The protein localises to the mitochondrion membrane. The protein resides in the nucleus. It carries out the reaction ubiquinone-10 + NADH + H(+) = ubiquinol-10 + NAD(+). It catalyses the reaction phylloquinone + NADH + H(+) = phylloquinol + NAD(+). The enzyme catalyses menaquinone-4 + NADH + H(+) = menaquinol-4 + NAD(+). The catalysed reaction is menadione + NADH + H(+) = menadiol + NAD(+). With respect to regulation, the modification by 4-hydroxy-2-nonenal (HNE) adduction in mitochondria results in loss of the oxidoreductase activity and activation of a novel function in mitochondrial oxidative stress signaling. An NAD(P)H-dependent oxidoreductase that acts as a key inhibitor of ferroptosis. At the plasma membrane, catalyzes reduction of coenzyme Q/ubiquinone-10 to ubiquinol-10, a lipophilic radical-trapping antioxidant that prevents lipid oxidative damage and consequently ferroptosis. Acts in parallel to GPX4 to suppress phospholipid peroxidation and ferroptosis. This anti-ferroptotic function is independent of cellular glutathione levels. Also acts as a potent radical-trapping antioxidant by mediating warfarin-resistant vitamin K reduction in the canonical vitamin K cycle: catalyzes NAD(P)H-dependent reduction of vitamin K (phylloquinone, menaquinone-4 and menadione) to hydroquinone forms. Hydroquinones act as potent radical-trapping antioxidants inhibitor of phospholipid peroxidation and ferroptosis. May play a role in mitochondrial stress signaling. Upon oxidative stress, associates with the lipid peroxidation end product 4-hydroxy-2-nonenal (HNE) forming a lipid adduct devoid of oxidoreductase activity, which then translocates from mitochondria into the nucleus triggering DNA damage and cell death. This chain is Ferroptosis suppressor protein 1 (aifm2), found in Xenopus tropicalis (Western clawed frog).